We begin with the raw amino-acid sequence, 249 residues long: Vesicle-associated membrane protein-associated protein A (249 aa).

A2 is modified (N-acetylalanine). The Cytoplasmic segment spans residues 2 to 227 (ASASGTMAKH…VSFRENVTSP (226 aa)). The MSP domain occupies 14 to 131 (ILVLDPPTDL…MDSKLRCVFE (118 aa)). Residues 50–53 (KVKT) are phosphorylated FFAT motif binding. Position 125 is an N6-acetyllysine (K125). The residue at position 166 (S166) is a Phosphoserine. Residues 169 to 205 (DTETRKLVEECKRLQGEMMKLSEENRLLRDEGLRLRK) are a coiled coil. A Phosphothreonine modification is found at T170. A phosphoserine mark is found at S214, S216, and S219. Residues 228–248 (LPSLLVVIAAIFIGFFLGKFI) traverse the membrane as a helical; Anchor for type IV membrane protein segment.

It belongs to the VAMP-associated protein (VAP) (TC 9.B.17) family. Homodimer; disulfide-linked. Heterodimer with VAPB. Interacts with VAMP1, VAMP2, STX1A, BET1, SEC22C and with the C-terminal domain of OCLN. Interacts (via MSP domain) with OSBPL1A (via FFAT motif). Interacts (via MSP domain) with ZFYVE27; may retain ZFYVE27 in the endoplasmic reticulum and regulate its function in cell projections formation. Interacts with OSBP. Interacts (via C-terminus) with RSAD2/viperin (via C-terminus). Interacts with IFITM3. Interacts with OSBPL3 (phosphorylated form). Interacts with KIF5A in a ZFYVE27-dependent manner. Interacts (via MSP domain) with STARD3 (via phosphorylated FFAT motif); this interaction recruits VAPA to the endosome. Interacts with STARD3NL (via FFAT motif). Interacts with CERT1. Interacts with PLEKHA3 and SACM1L to form a ternary complex. Interacts with VPS13A (via FFAT motif). Interacts with RB1CC1 (via phosphorylated FFAT motif), MIGA2 (via phosphorylated FFAT motif), RMDN3 (via phosphorylated FFAT motif), KCNB1 (via phosphorylated FFAT motif) and KCNB2 (via phosphorylated FFAT motif). Interacts (via MSP domain) with WDR44 (via FFAT-like motif); the interactions connect the endoplasmic reticulum (ER) with the endosomal tubule.

The protein localises to the endoplasmic reticulum membrane. The protein resides in the cell junction. Its subcellular location is the tight junction. It is found in the cell membrane. Endoplasmic reticulum (ER)-anchored protein that mediates the formation of contact sites between the ER and endosomes via interaction with FFAT motif-containing proteins such as STARD3 or WDR44. STARD3-VAPA interaction enables cholesterol transfer from the ER to endosomes. Via interaction with WDR44 participates in neosynthesized protein export. In addition, recruited to the plasma membrane through OSBPL3 binding. The OSBPL3-VAPA complex stimulates RRAS signaling which in turn attenuates integrin beta-1 (ITGB1) activation at the cell surface. With OSBPL3, may regulate ER morphology. May play a role in vesicle trafficking. In Bos taurus (Bovine), this protein is Vesicle-associated membrane protein-associated protein A.